The sequence spans 418 residues: Thyroid hormone receptor alpha-A (418 aa).

The tract at residues 1–38 is disordered; that stretch reads MDQNLSGLDCLSEPDEKRWPDGKRKRKNSQCMGKSGMS. The segment at 1-60 is modulating; that stretch reads MDQNLSGLDCLSEPDEKRWPDGKRKRKNSQCMGKSGMSGDSLVSLPSAGYIPSYLDKDEP. 2 consecutive NR C4-type zinc fingers follow at residues 61–81 and 99–123; these read CVVC…CEGC and CKYD…FKKC. The nuclear receptor DNA-binding region spans 61–135; it reads CVVCSDKATG…VGMAMDLVLD (75 aa). The NR LBD domain maps to 171-415; it reads EEWELIRIVT…PPLFLEVFED (245 aa).

It belongs to the nuclear hormone receptor family. NR1 subfamily. Binds to thyroid hormone receptor element (TRE) weakly as homodimers and monomers, but binds TRE with much higher affinity as heterodimers with retinoid X receptors. Can bind DNA as a heterodimer with either rxra or rxrg.

It is found in the nucleus. Functionally, high affinity receptor for triiodothyronine (T3). This chain is Thyroid hormone receptor alpha-A (thra-a), found in Xenopus laevis (African clawed frog).